We begin with the raw amino-acid sequence, 188 residues long: Elongation factor P (188 aa).

This sequence belongs to the elongation factor P family.

It localises to the cytoplasm. The protein operates within protein biosynthesis; polypeptide chain elongation. Involved in peptide bond synthesis. Stimulates efficient translation and peptide-bond synthesis on native or reconstituted 70S ribosomes in vitro. Probably functions indirectly by altering the affinity of the ribosome for aminoacyl-tRNA, thus increasing their reactivity as acceptors for peptidyl transferase. The polypeptide is Elongation factor P (Sulfurovum sp. (strain NBC37-1)).